The chain runs to 884 residues: Bifunctional heparan sulfate N-deacetylase/N-sulfotransferase 2 (884 aa).

Residues 1–18 (MLKLWKVVRPARQLELHR) lie on the Cytoplasmic side of the membrane. Residues 19–39 (LILLLIAFSLGSMGFLAYYVS) form a helical; Signal-anchor for type II membrane protein membrane-spanning segment. The Lumenal portion of the chain corresponds to 40–884 (TSPKAKEPLP…REELQHSSSG (845 aa)). The tract at residues 41-598 (SPKAKEPLPL…KRHKDIWSKE (558 aa)) is heparan sulfate N-deacetylase 2. Positions 49-82 (PLPLGDCSSSGAAGGPGPVRPPVPPRPPRPPETA) are disordered. Over residues 66–79 (PVRPPVPPRPPRPP) the composition is skewed to pro residues. Asn-351 and Asn-401 each carry an N-linked (GlcNAc...) asparagine glycan. The tract at residues 599–884 (KTCDRLPKFL…REELQHSSSG (286 aa)) is heparan sulfate N-sulfotransferase 2. Lys-614 serves as the catalytic For sulfotransferase activity. 614-618 (KTGTT) contributes to the 3'-phosphoadenylyl sulfate binding site. N-linked (GlcNAc...) asparagine glycosylation is present at Asn-667. Ser-712 provides a ligand contact to 3'-phosphoadenylyl sulfate. N-linked (GlcNAc...) asparagine glycosylation is found at Asn-727 and Asn-803. Cysteines 818 and 828 form a disulfide. Residue 833–837 (KGRKY) coordinates 3'-phosphoadenylyl sulfate.

Belongs to the sulfotransferase 1 family. NDST subfamily. Monomer.

Its subcellular location is the golgi apparatus membrane. The catalysed reaction is alpha-D-glucosaminyl-[heparan sulfate](n) + 3'-phosphoadenylyl sulfate = N-sulfo-alpha-D-glucosaminyl-[heparan sulfate](n) + adenosine 3',5'-bisphosphate + 2 H(+). It functions in the pathway glycan metabolism; heparan sulfate biosynthesis. The protein operates within glycan metabolism; heparin biosynthesis. Essential bifunctional enzyme that catalyzes both the N-deacetylation and the N-sulfation of glucosamine (GlcNAc) of the glycosaminoglycan in heparan sulfate. Modifies the GlcNAc-GlcA disaccharide repeating sugar backbone to make N-sulfated heparosan, a prerequisite substrate for later modifications in heparin biosynthesis. Plays a role in determining the extent and pattern of sulfation of heparan sulfate. Required for the exosomal release of SDCBP, CD63 and syndecan. The protein is Bifunctional heparan sulfate N-deacetylase/N-sulfotransferase 2 (NDST2) of Bos taurus (Bovine).